A 1765-amino-acid polypeptide reads, in one-letter code: Sodium channel protein type 11 subunit alpha (1765 aa).

Residues 1 to 126 (MEERYYPVIF…PLRSLMIRIS (126 aa)) are Cytoplasmic-facing. Residues 115–403 (FNPLRSLMIR…VTMAYEEQNR (289 aa)) form an I repeat. The chain crosses the membrane as a helical span at residues 127 to 148 (VHSVFSMFIICTVIINCMFMAN). At 149 to 157 (SMERSFDND) the chain is on the extracellular side. The helical transmembrane segment at 158-177 (IPEYVFIGIYILEAVIKILA) threads the bilayer. The Cytoplasmic segment spans residues 178 to 189 (RGFIVDEFSFLR). A helical membrane pass occupies residues 190-209 (DPWNWLDFIVIGTAIATCFP). The Extracellular portion of the chain corresponds to 210–216 (GSQVNLS). Asn214 carries N-linked (GlcNAc...) asparagine glycosylation. The chain crosses the membrane as a helical; Voltage-sensor span at residues 217-236 (ALRTFRVFRALKAISVISGL). The Cytoplasmic portion of the chain corresponds to 237 to 252 (KVIVGALLRSVKKLVD). The helical transmembrane segment at 253–266 (VMVLTLFCLSIFAL) threads the bilayer. Topologically, residues 267 to 339 (VGQQLFMGIL…PDNNYTKFDN (73 aa)) are extracellular. Cys280 and Cys317 are disulfide-bonded. Residues Asn319 and Asn333 are each glycosylated (N-linked (GlcNAc...) asparagine). Residues 340–364 (FGWSFLAMFRVMTQDSWERLYRQIL) constitute an intramembrane region (pore-forming). Residues 365 to 371 (RTSGIYF) lie on the Extracellular side of the membrane. A helical membrane pass occupies residues 372–397 (VFFFVVVIFLGSFYLLNLTLAVVTMA). The Cytoplasmic segment spans residues 398-567 (YEEQNRNVAA…WLCIKKVLRT (170 aa)). An II repeat occupies 554–820 (CSPQWLCIKK…EGETRKTKVQ (267 aa)). A helical transmembrane segment spans residues 568–591 (IMTDPFTELAITICIIINTVFLAV). The Extracellular portion of the chain corresponds to 592 to 602 (EHHNMDDNLKT). A helical membrane pass occupies residues 603-626 (ILKIGNWVFTGIFIAEMCLKIIAL). Topologically, residues 627 to 634 (DPYHYFRH) are cytoplasmic. Residues 635 to 656 (GWNVFDSIVALLSLADVLYNTL) form a helical membrane-spanning segment. Topologically, residues 657-662 (SDNNRS) are extracellular. The N-linked (GlcNAc...) asparagine glycan is linked to Asn660. Residues 663–682 (FLASLRVLRVFKLAKSWPTL) traverse the membrane as a helical; Voltage-sensor segment. At 683–697 (NTLIKIIGHSVGALG) the chain is on the cytoplasmic side. The chain crosses the membrane as a helical span at residues 698-720 (NLTVVLTIVVFIFSVVGMRLFGT). Residues 721–741 (KFNKTAYATQERPRRRWHMDN) are Extracellular-facing. Residue Asn723 is glycosylated (N-linked (GlcNAc...) asparagine). The segment at residues 742 to 762 (FYHSFLVVFRILCGEWIENMW) is an intramembrane region (pore-forming). The Extracellular segment spans residues 763–772 (GCMQDMDGSP). An intrachain disulfide couples Cys764 to Cys774. A helical membrane pass occupies residues 773 to 798 (LCIIVFVLIMVIGKLVVLNLFIALLL). Over 799-1029 (NSFSNEEKDG…WWNIRKTCYQ (231 aa)) the chain is Cytoplasmic. Residues 1022–1319 (NIRKTCYQIV…KKYYNAMKKL (298 aa)) form an III repeat. The helical transmembrane segment at 1030 to 1052 (IVKHSWFESFIIFVILLSSGALI) threads the bilayer. At 1053–1066 (FEDVNLPSRPQVEK) the chain is on the extracellular side. The chain crosses the membrane as a helical span at residues 1067 to 1092 (LLRCTDNIFTFIFLLEMILKWVAFGF). Topologically, residues 1093–1098 (RRYFTS) are cytoplasmic. The chain crosses the membrane as a helical span at residues 1099–1116 (AWCWLDFLIVVVSVLSLM). Asn1117 is a topological domain (extracellular). The helical; Voltage-sensor transmembrane segment at 1118-1139 (LPSLKSFRTLRALRPLRALSQF) threads the bilayer. The Cytoplasmic segment spans residues 1140–1158 (EGMKVVVYALISAIPAILN). The helical transmembrane segment at 1159-1180 (VLLVCLIFWLVFCILGVNLFSG) threads the bilayer. Over 1181–1223 (KFGRCINGTDINMYLDFTEVPNRSQCNISNYSWKVPQVNFDNV) the chain is Extracellular. Asn1187, Asn1202, Asn1207, and Asn1210 each carry an N-linked (GlcNAc...) asparagine glycan. An intramembrane region (pore-forming) is located at residues 1224–1245 (GNAYLALLQVATYKGWLEIMNA). The Extracellular segment spans residues 1246–1261 (AVDSREKDEQPDFEAN). The chain crosses the membrane as a helical span at residues 1262-1288 (LYAYLYFVVFIIFGSFFTLNLFIGVII). The Cytoplasmic segment spans residues 1289–1341 (DNFNQQQKKLGGQDIFMTEEQKKYYNAMKKLGTKKPQKPIPRPLNKCQAFVFD). The stretch at 1328 to 1619 (IPRPLNKCQA…WEKFDPEASQ (292 aa)) is one IV repeat. The chain crosses the membrane as a helical span at residues 1342 to 1365 (LVTSQVFDVIILGLIVLNMIIMMA). The Extracellular portion of the chain corresponds to 1366-1376 (ESADQPKDVKK). Residues 1377–1400 (TFDILNIAFVVIFTIECLIKVFAL) form a helical membrane-spanning segment. Over 1401-1406 (RQHYFT) the chain is Cytoplasmic. The chain crosses the membrane as a helical span at residues 1407 to 1430 (NGWNLFDCVVVVLSIISTLVSRLE). The Extracellular segment spans residues 1431–1440 (DSDISFPPTL). A helical; Voltage-sensor transmembrane segment spans residues 1441 to 1463 (FRVVRLARIGRILRLVRAARGIR). Residues 1464–1478 (TLLFALMMSLPSLFN) lie on the Cytoplasmic side of the membrane. Residues 1479-1501 (IGLLLFLVMFIYAIFGMSWFSKV) form a helical membrane-spanning segment. Over 1502 to 1515 (KKGSGIDDIFNFET) the chain is Extracellular. An intramembrane region (pore-forming) is located at residues 1516-1538 (FTGSMLCLFQITTSAGWDTLLNP). Over 1539–1559 (MLEAKEHCNSSSQDSCQQPQI) the chain is Extracellular. The N-linked (GlcNAc...) asparagine glycan is linked to Asn1547. Residues 1560 to 1584 (AVVYFVSYIIISFLIVVNMYIAVIL) form a helical membrane-spanning segment. Residues 1585 to 1765 (ENFNTATEES…DVAKVKVHND (181 aa)) are Cytoplasmic-facing.

It belongs to the sodium channel (TC 1.A.1.10) family. Nav1.9/SCN11A subfamily. In terms of assembly, the voltage-resistant sodium channel consists of an ion conducting pore forming alpha-subunit regulated by one or more auxiliary subunits SCN1B, SCN2B and SCN3B. In terms of tissue distribution, expressed (at protein level) in myenteric sensory neurons. Expressed in small sensory neurons of the dorsal root ganglia (C-fiber neurons) and trigeminal ganglia.

The protein resides in the cell membrane. It catalyses the reaction Na(+)(in) = Na(+)(out). Its activity is regulated as follows. Activity is not sensitive to inhibition by tetrodotoxin. In terms of biological role, sodium channel mediating the voltage-dependent sodium ion permeability of excitable membranes. Assuming opened or closed conformations in response to the voltage difference across the membrane, the protein forms a sodium-selective channel through which sodium ions may pass in accordance with their electrochemical gradient. Involved in membrane depolarization during action potential in nociceptors which function as key relay stations for the electrical transmission of pain signals from the periphery to the central nervous system. Also involved in rapid BDNF-evoked neuronal depolarization. The protein is Sodium channel protein type 11 subunit alpha of Rattus norvegicus (Rat).